Here is a 315-residue protein sequence, read N- to C-terminus: Protoheme IX farnesyltransferase 1 (315 aa).

The next 9 membrane-spanning stretches (helical) occupy residues 25 to 45 (PGIIFGNLISVAGGFLLAAKG), 49 to 69 (LALMLASLVGLSLVVASGCAV), 87 to 107 (RVTVTGEIAVGNVLAFGLALG), 120 to 139 (ALALLFAVIGYIVYVGVYSL), 145 to 165 (SVYGTLVGSFSGAVPPVVGYC), 176 to 196 (AILLLMFSLWQMPHSYAIAIF), 220 to 240 (LHIVLYIAVFALVSALLPLAG), 242 to 262 (TGIAFMAVTCATSLWWLAMAL), and 280 to 300 (GFSIITIMALSITMALDSQVI).

Belongs to the UbiA prenyltransferase family. Protoheme IX farnesyltransferase subfamily.

It localises to the cell inner membrane. The enzyme catalyses heme b + (2E,6E)-farnesyl diphosphate + H2O = Fe(II)-heme o + diphosphate. It functions in the pathway porphyrin-containing compound metabolism; heme O biosynthesis; heme O from protoheme: step 1/1. Converts heme B (protoheme IX) to heme O by substitution of the vinyl group on carbon 2 of heme B porphyrin ring with a hydroxyethyl farnesyl side group. This is Protoheme IX farnesyltransferase 1 from Shewanella sp. (strain W3-18-1).